The primary structure comprises 119 residues: Class I hydrophobin 2 (119 aa).

Positions 1-22 (MFARISTIITTLFFAMLAAATA) are cleaved as a signal peptide. 4 cysteine pairs are disulfide-bonded: C36–C97, C45–C91, C46–C79, and C98–C112.

This sequence belongs to the fungal hydrophobin family. As to quaternary structure, self-assembles to form functional amyloid fibrils called rodlets. Self-assembly into fibrillar rodlets occurs spontaneously at hydrophobic:hydrophilic interfaces and the rodlets further associate laterally to form amphipathic monolayers.

The protein localises to the secreted. Its subcellular location is the cell wall. Aerial growth, conidiation, and dispersal of filamentous fungi in the environment rely upon a capability of their secreting small amphipathic proteins called hydrophobins (HPBs) with low sequence identity. Class I can self-assemble into an outermost layer of rodlet bundles on aerial cell surfaces, conferring cellular hydrophobicity that supports fungal growth, development and dispersal; whereas Class II form highly ordered films at water-air interfaces through intermolecular interactions but contribute nothing to the rodlet structure. Abh2 is a class I hydrophobin involved in the emergence of aerial hyphae and strands. This is Class I hydrophobin 2 from Agaricus bisporus (White button mushroom).